The sequence spans 159 residues: 3-hydroxyacyl-[acyl-carrier-protein] dehydratase FabZ (159 aa).

His62 is a catalytic residue.

Belongs to the thioester dehydratase family. FabZ subfamily.

The protein localises to the cytoplasm. It carries out the reaction a (3R)-hydroxyacyl-[ACP] = a (2E)-enoyl-[ACP] + H2O. Functionally, involved in unsaturated fatty acids biosynthesis. Catalyzes the dehydration of short chain beta-hydroxyacyl-ACPs and long chain saturated and unsaturated beta-hydroxyacyl-ACPs. This chain is 3-hydroxyacyl-[acyl-carrier-protein] dehydratase FabZ, found in Methylobacterium nodulans (strain LMG 21967 / CNCM I-2342 / ORS 2060).